Reading from the N-terminus, the 316-residue chain is Conjugated bile acid hydrolase (316 aa).

Catalysis depends on Cys2, which acts as the Nucleophile. Residues Cys2 and Arg18 each contribute to the deoxycholate site. Asn81 contributes to the taurine binding site.

Belongs to the peptidase C59 family.

The enzyme catalyses cholate + taurine = taurocholate + H2O. It catalyses the reaction taurochenodeoxycholate + H2O = chenodeoxycholate + taurine. It carries out the reaction taurodeoxycholate + H2O = deoxycholate + taurine. The catalysed reaction is glycocholate + H2O = cholate + glycine. The enzyme catalyses glycodeoxycholate + H2O = deoxycholate + glycine. Its pathway is lipid metabolism; bile acid biosynthesis. Functionally, bile salt hydrolase that catalyzes the deconjugation of glycine- and taurine-linked bile salts, which occurs naturally in the intestines of humans, releasing amino acid residues and deconjugated bile salts (bile acids). Can hydrolyze the amide bond in the bile salts taurocholate (TCA), taurodeoxycholate (TDCA), taurochenodeoxycholate (TCDCA), glycocholate (GCA) and glycodeoxycholate (GDCA). Shows highest activity toward the taurine-conjugated bile salts TCA and TCDCA. The activity toward the other three substrates (TDCA, GCA and GDCA) is relatively low. This enzyme likely contributes to bile salt resistance of the strain and may be associated with survival capability of strain JCM1131 within the human intestine by bile detoxification. The sequence is that of Conjugated bile acid hydrolase from Lactobacillus gasseri (strain ATCC 33323 / DSM 20243 / BCRC 14619 / CIP 102991 / JCM 1131 / KCTC 3163 / NCIMB 11718 / NCTC 13722 / AM63).